Consider the following 650-residue polypeptide: Acetoacetyl-coenzyme A synthetase (650 aa).

CoA is bound at residue 199–202 (YNGK). ATP contacts are provided by residues 392–394 (GSP), Asp-504, Arg-519, and Arg-530. Val-546 contributes to the Mg(2+) binding site. CoA is bound at residue Arg-587. N6-acetyllysine is present on Lys-612.

The protein belongs to the ATP-dependent AMP-binding enzyme family. Mg(2+) serves as cofactor. In terms of processing, acetylated. Deacetylation by the SIR2-homolog deacetylase activates the enzyme.

The catalysed reaction is acetoacetate + ATP + CoA = acetoacetyl-CoA + AMP + diphosphate. Its pathway is biopolymer metabolism; poly-(R)-3-hydroxybutanoate degradation. Catalyzes the conversion of acetoacetate into acetoacetyl-CoA. Is involved in poly-3-hydroxybutyrate (PHB) degradation, which allows growth of R.meliloti on PHB cycle intermediates. This is Acetoacetyl-coenzyme A synthetase from Rhizobium meliloti (strain 1021) (Ensifer meliloti).